Reading from the N-terminus, the 435-residue chain is 3-phosphoshikimate 1-carboxyvinyltransferase (435 aa).

3-phosphoshikimate contacts are provided by Lys-22, Ser-23, and Arg-27. Residue Lys-22 participates in phosphoenolpyruvate binding. Residues Gly-95 and Arg-123 each coordinate phosphoenolpyruvate. Ser-168, Gln-170, Asp-319, and Lys-346 together coordinate 3-phosphoshikimate. Residue Gln-170 participates in phosphoenolpyruvate binding. Asp-319 (proton acceptor) is an active-site residue. Residues Arg-350 and Arg-393 each contribute to the phosphoenolpyruvate site.

The protein belongs to the EPSP synthase family. In terms of assembly, monomer.

Its subcellular location is the cytoplasm. The enzyme catalyses 3-phosphoshikimate + phosphoenolpyruvate = 5-O-(1-carboxyvinyl)-3-phosphoshikimate + phosphate. It participates in metabolic intermediate biosynthesis; chorismate biosynthesis; chorismate from D-erythrose 4-phosphate and phosphoenolpyruvate: step 6/7. Functionally, catalyzes the transfer of the enolpyruvyl moiety of phosphoenolpyruvate (PEP) to the 5-hydroxyl of shikimate-3-phosphate (S3P) to produce enolpyruvyl shikimate-3-phosphate and inorganic phosphate. The protein is 3-phosphoshikimate 1-carboxyvinyltransferase of Chloroflexus aggregans (strain MD-66 / DSM 9485).